We begin with the raw amino-acid sequence, 712 residues long: Autophagy-related protein 13 (712 aa).

Disordered regions lie at residues 388-443 (AGST…ETPP) and 568-611 (GSVG…DDDE). Residues 402 to 415 (SSVGSGSKYSSSFG) are compositionally biased toward low complexity. Residues 412–420 (SSFGRIRRH) form an ATG17-binding region. The span at 424 to 439 (RRSESIDRTAKPRKSN) shows a compositional bias: basic and acidic residues. Residues 441–500 (TPPEDLLEFVKLLEDKKELNMKPSTILPQQDISSSLIKFQSMKPNNDTLSDNLSMSMSID) form an ATG1-binding region. Over residues 576–585 (TNEDSKEDED) the composition is skewed to acidic residues.

The protein belongs to the ATG13 family. Fungi subfamily. Hypophosphorylated form interacts with ATG1 to form the ATG1-ATG13 kinase complex. The ATG1-ATG13 complex interacts with the ATG17-ATG29-ATG31 complex through direct interaction with ATG17. Interacts with VAC8. In terms of processing, hyperphosphorylated under nutrient-rich conditions. Starvation and TOR inactivation results in ATG13 partial dephosphorylation leading to ATG1-binding. Dephosphorylation induces ATG17-binding.

Its subcellular location is the cytoplasm. It is found in the preautophagosomal structure. In terms of biological role, activates the ATG1 kinase in a nutritional condition dependent manner through the TOR pathway, leading to autophagy. Involved in ATG9 and ATG23 cycling through the pre-autophagosomal structure. Also involved in cytoplasm to vacuole transport (Cvt) and more specifically in Cvt vesicle formation. Seems to play a role in the switching machinery regulating the conversion between the Cvt pathway and autophagy. Finally, ATG13 is also required for glycogen storage during stationary phase. The sequence is that of Autophagy-related protein 13 from Kluyveromyces marxianus (strain DMKU3-1042 / BCC 29191 / NBRC 104275) (Yeast).